The primary structure comprises 2537 residues: Histone-lysine N-methyltransferase SETD2 (2537 aa).

The segment covering 1 to 12 (MKPLPSQQPPPK) has biased composition (pro residues). 5 disordered regions span residues 1–31 (MKPLPSQQPPPKMGDFYDPEHPTPEEEENEA), 91–142 (TALS…ELGR), 156–483 (PQLA…RDLR), 510–554 (YTSK…STSR), and 607–629 (SEREKTGSPTPSNQLNDSPTFKK). Basic and acidic residues predominate over residues 18 to 31 (DPEHPTPEEEENEA). Residues 91 to 103 (TALSNEKQSDSPN) are compositionally biased toward polar residues. Ser-132 carries the phosphoserine modification. Residues 156–166 (PQLAASTTAAS) show a composition bias toward low complexity. A compositionally biased stretch (pro residues) spans 187-205 (PSSPPPPPPPPQASSPSPP). Ser-242 bears the Phosphoserine mark. Residues 264–291 (LEEHTVQTLKEQADHLLQKEDSHIGKEE) show a composition bias toward basic and acidic residues. A phosphoserine mark is found at Ser-322, Ser-324, and Ser-345. Basic and acidic residues-rich tracts occupy residues 336–401 (RSHD…ERDR), 422–433 (RSERSHYYDSER), 440–468 (PYRERTRYSRPYTDNRARESSDSEDEYKK), and 510–528 (YTSKLERESKRTSEHETIK). Residue Lys-360 forms a Glycyl lysine isopeptide (Lys-Gly) (interchain with G-Cter in SUMO2) linkage. The residue at position 423 (Ser-423) is a Phosphoserine. A phosphoserine mark is found at Ser-532, Ser-614, and Ser-624. Residues 613–625 (GSPTPSNQLNDSP) are compositionally biased toward polar residues. The residue at position 626 (Thr-626) is a Phosphothreonine. The residue at position 633 (Ser-633) is a Phosphoserine. Residue Lys-637 forms a Glycyl lysine isopeptide (Lys-Gly) (interchain with G-Cter in SUMO2) linkage. 4 positions are modified to phosphoserine: Ser-697, Ser-707, Ser-743, and Ser-753. A disordered region spans residues 729-749 (RDSDDTCRQHNTSKSPFREME). Lys-775 participates in a covalent cross-link: Glycyl lysine isopeptide (Lys-Gly) (interchain with G-Cter in SUMO2). Disordered regions lie at residues 829–894 (CDNR…PTLD), 941–974 (QEAQEEGNSILHERRGRPEIPLDEEQRGHTHISD), 1015–1078 (EDYS…HYSD), and 1135–1185 (AHAQ…EDLP). Over residues 830–847 (DNREPTDRHSENTCDEYK) the composition is skewed to basic and acidic residues. Residues 849–858 (SIGSTSSASH) are compositionally biased toward polar residues. Residues 867-883 (PIGSSGISSLQSPPSGI) show a composition bias toward low complexity. Residues 951 to 974 (LHERRGRPEIPLDEEQRGHTHISD) show a composition bias toward basic and acidic residues. Positions 1026–1037 (DESDSEDTESDD) are enriched in acidic residues. Residue Ser-1077 is modified to Phosphoserine. The span at 1150-1165 (SRSDHLGHLNPEDTLR) shows a compositional bias: basic and acidic residues. Ser-1201 carries the phosphoserine modification. Disordered regions lie at residues 1232-1254 (GWDFSQQERPTTTYQQPDSSYGT), 1280-1346 (WDPR…APEI), and 1366-1396 (NFEKNDIKERGPPKKRRQELESDSESDGELQ). Polar residues-rich tracts occupy residues 1235–1254 (FSQQERPTTTYQQPDSSYGT) and 1319–1329 (RSGSHFSSPSN). A compositionally biased stretch (basic and acidic residues) spans 1366–1377 (NFEKNDIKERGP). Residues Ser-1387, Ser-1389, and Ser-1391 each carry the phosphoserine modification. The segment at 1392-1688 (DGELQARKKV…KKERSRKKDS (297 aa)) is interaction with TUBA1A. One can recognise an AWS domain in the interval 1468-1522 (IKRMQCECTPLSKDERAQGEVACGEDCLNRLLMIECSSRCPNGDYCSNRRFQRKQ). Zn(2+) is bound by residues Cys-1473, Cys-1475, Cys-1490, Cys-1494, Cys-1503, Cys-1507, and Cys-1513. Positions 1524 to 1641 (ADVEVILTEK…SGSELTFDYQ (118 aa)) constitute an SET domain. S-adenosyl-L-methionine-binding positions include 1534 to 1536 (KGW), 1577 to 1579 (HYY), and 1602 to 1603 (NH). Cys-1605 lines the Zn(2+) pocket. Residues 1648–1664 (EAQKCFCGSANCRGYLG) enclose the Post-SET domain. Residue Gln-1650 coordinates S-adenosyl-L-methionine. A Zn(2+)-binding site is contributed by Cys-1652. Position 1653 (Phe-1653) interacts with S-adenosyl-L-methionine. Zn(2+)-binding residues include Cys-1654 and Cys-1659. Phosphoserine is present on residues Ser-1670, Ser-1818, and Ser-1819. The tract at residues 1806-1848 (TAVPQLSEGDGYSSENTSRAHTPLNTPDPSAKPSTEMDTDTPK) is disordered. The span at 1818–1833 (SSENTSRAHTPLNTPD) shows a compositional bias: polar residues. 2 positions are modified to phosphothreonine: Thr-1827 and Thr-1846. A phosphoserine mark is found at Ser-1862 and Ser-1926. Disordered regions lie at residues 1914-1981 (SEAT…DISD) and 1993-2110 (LKEV…AQKQ). The segment covering 1934-1946 (TEPKDSNGTKLEE) has biased composition (basic and acidic residues). The segment covering 1947 to 1964 (TIAEETPSQDEEEGVSDV) has biased composition (acidic residues). A phosphoserine mark is found at Ser-1954, Ser-1962, and Ser-1969. 3 stretches are compositionally biased toward basic and acidic residues: residues 1965–1978 (ESERSQEPPDKTVD), 1993–2020 (LKEVYRIPKKSQTEKESTVAERGRDAAA), and 2032–2045 (RSRERDPDKQSQNK). Phosphoserine occurs at positions 2053 and 2055. Basic and acidic residues-rich tracts occupy residues 2063 to 2073 (RGTKRPDDRYD) and 2084 to 2108 (KDRNKLSTEERRKLFEQEVAQREAQ). A coiled-coil region spans residues 2090 to 2119 (STEERRKLFEQEVAQREAQKQQQQMQNLGM). Residues 2110–2339 (QQQQMQNLGM…APGQPQSLQP (230 aa)) are low charge region. Positions 2362–2395 (IVLPPNWKTARDPEGKIYYYHVITRQTQWDPPTW) constitute a WW domain. The disordered stretch occupies residues 2412–2438 (LGTPTYDENPMKTSKKPKTAEADTSSE). The interaction with POLR2A stretch occupies residues 2430-2537 (TAEADTSSEL…YKPKEDTELE (108 aa)).

The protein belongs to the class V-like SAM-binding methyltransferase superfamily. Histone-lysine methyltransferase family. SET2 subfamily. Specifically interacts with hyperphosphorylated C-terminal domain (CTD) of RNA polymerase II large subunit (POLR2A): binds to CTD heptad repeats doubly phosphorylated on 'Ser-2' and 'Ser-5' of each heptad. Interacts with HTT. Interacts with IWS1. Interacts with p53/TP53; leading to regulate p53/TP53 target genes. Component of a complex with HNRNPL. Interacts with TUBA1A; the interaction is independent on alpha-tubulin acetylation on 'Lys-40'. Post-translationally, may be automethylated.

It localises to the nucleus. The protein localises to the chromosome. It catalyses the reaction L-lysyl(36)-[histone H3] + 3 S-adenosyl-L-methionine = N(6),N(6),N(6)-trimethyl-L-lysyl(36)-[histone H3] + 3 S-adenosyl-L-homocysteine + 3 H(+). The enzyme catalyses L-lysyl-[protein] + S-adenosyl-L-methionine = N(6)-methyl-L-lysyl-[protein] + S-adenosyl-L-homocysteine + H(+). It carries out the reaction L-lysyl-[protein] + 3 S-adenosyl-L-methionine = N(6),N(6),N(6)-trimethyl-L-lysyl-[protein] + 3 S-adenosyl-L-homocysteine + 3 H(+). Its activity is regulated as follows. Specifically inhibited by sinefungin derivatives. Histone methyltransferase that specifically trimethylates 'Lys-36' of histone H3 (H3K36me3) using dimethylated 'Lys-36' (H3K36me2) as substrate. It is capable of trimethylating unmethylated H3K36 (H3K36me0) in vitro. Represents the main enzyme generating H3K36me3, a specific tag for epigenetic transcriptional activation. Plays a role in chromatin structure modulation during elongation by coordinating recruitment of the FACT complex and by interacting with hyperphosphorylated POLR2A. Acts as a key regulator of DNA mismatch repair in G1 and early S phase by generating H3K36me3, a mark required to recruit MSH6 subunit of the MutS alpha complex: early recruitment of the MutS alpha complex to chromatin to be replicated allows a quick identification of mismatch DNA to initiate the mismatch repair reaction. Required for DNA double-strand break repair in response to DNA damage: acts by mediating formation of H3K36me3, promoting recruitment of RAD51 and DNA repair via homologous recombination (HR). Acts as a tumor suppressor. H3K36me3 also plays an essential role in the maintenance of a heterochromatic state, by recruiting DNA methyltransferase DNMT3A. H3K36me3 is also enhanced in intron-containing genes, suggesting that SETD2 recruitment is enhanced by splicing and that splicing is coupled to recruitment of elongating RNA polymerase. Required during angiogenesis. Required for endoderm development by promoting embryonic stem cell differentiation toward endoderm: acts by mediating formation of H3K36me3 in distal promoter regions of FGFR3, leading to regulate transcription initiation of FGFR3. In addition to histones, also mediates methylation of other proteins, such as tubulins and STAT1. Trimethylates 'Lys-40' of alpha-tubulins such as TUBA1B (alpha-TubK40me3); alpha-TubK40me3 is required for normal mitosis and cytokinesis and may be a specific tag in cytoskeletal remodeling. Involved in interferon-alpha-induced antiviral defense by mediating both monomethylation of STAT1 at 'Lys-525' and catalyzing H3K36me3 on promoters of some interferon-stimulated genes (ISGs) to activate gene transcription. The sequence is that of Histone-lysine N-methyltransferase SETD2 from Mus musculus (Mouse).